The chain runs to 850 residues: Endoribonuclease ysh-1 (850 aa).

Positions 83, 85, 87, 88, 173, and 194 each coordinate Zn(2+). Residue His442 is the Proton donor of the active site. Position 464 (His464) interacts with Zn(2+). Disordered regions lie at residues 685–708 (VKRS…PHSH) and 732–784 (SPIV…EQQL). A compositionally biased stretch (polar residues) spans 744–754 (PTTKAITSPSE). Positions 755-766 (ETAKSSDVKSDA) are enriched in basic and acidic residues. The segment covering 767–781 (DADASMDVSEEDEDE) has biased composition (acidic residues).

It belongs to the metallo-beta-lactamase superfamily. RNA-metabolizing metallo-beta-lactamase-like family. CPSF2/YSH1 subfamily.

It localises to the nucleus. Functionally, component of the cleavage factor I (CF I) involved in pre-mRNA 3'-end processing. The polypeptide is Endoribonuclease ysh-1 (ysh-1) (Neurospora crassa (strain ATCC 24698 / 74-OR23-1A / CBS 708.71 / DSM 1257 / FGSC 987)).